The chain runs to 298 residues: NADH-cytochrome b5 reductase 2 (298 aa).

The chain crosses the membrane as a helical span at residues 13 to 33; sequence FLPFAIGAVAVTAGALYLNGW. One can recognise an FAD-binding FR-type domain in the interval 48–152; the sequence is RKWIDLELEK…QGPIPKWQWK (105 aa). 155 to 190 lines the FAD pocket; sequence SFDTITLLGGGTGITPLYQLVHHITQNKEDKTKINL.

It belongs to the flavoprotein pyridine nucleotide cytochrome reductase family. It depends on FAD as a cofactor.

Its subcellular location is the mitochondrion outer membrane. It catalyses the reaction 2 Fe(III)-[cytochrome b5] + NADH = 2 Fe(II)-[cytochrome b5] + NAD(+) + H(+). In terms of biological role, may mediate the reduction of outer membrane cytochrome b5. The sequence is that of NADH-cytochrome b5 reductase 2 (MCR1) from Candida glabrata (strain ATCC 2001 / BCRC 20586 / JCM 3761 / NBRC 0622 / NRRL Y-65 / CBS 138) (Yeast).